We begin with the raw amino-acid sequence, 264 residues long: MNWAGLYAILSGVNRHSTSIGRIWLSVVFIFRIMVLVAAAESVWGDEKSAFTCNTQQPGCNSVCYDHFFPISHIRLWALQLIIVSTPALLVAMHVAHLQHQEKKELRLSRHVKDQELAEVKKHKVKISGTLWWTYISSVFFRIIFEAAFMYIFYLIYPGYSMIRLLKCDAYPCPNTVDCFVSRPTEKTIFTVFMLVASGVCIVLNVAEVFFLIAQACTRRARRHRDSGSISKEHQQNEMNLLITGGSIIKRSAGQEKGDHCSTS.

Over 1–22 the chain is Cytoplasmic; sequence MNWAGLYAILSGVNRHSTSIGR. A helical transmembrane segment spans residues 23-45; sequence IWLSVVFIFRIMVLVAAAESVWG. Residues 46-75 are Extracellular-facing; sequence DEKSAFTCNTQQPGCNSVCYDHFFPISHIR. A helical transmembrane segment spans residues 76–98; it reads LWALQLIIVSTPALLVAMHVAHL. Over 99 to 130 the chain is Cytoplasmic; the sequence is QHQEKKELRLSRHVKDQELAEVKKHKVKISGT. The chain crosses the membrane as a helical span at residues 131-153; the sequence is LWWTYISSVFFRIIFEAAFMYIF. Residues 154–191 are Extracellular-facing; the sequence is YLIYPGYSMIRLLKCDAYPCPNTVDCFVSRPTEKTIFT. A helical transmembrane segment spans residues 192–214; sequence VFMLVASGVCIVLNVAEVFFLIA. Over 215–264 the chain is Cytoplasmic; the sequence is QACTRRARRHRDSGSISKEHQQNEMNLLITGGSIIKRSAGQEKGDHCSTS.

It belongs to the connexin family. Beta-type (group I) subfamily. A connexon is composed of a hexamer of connexins. Lung, liver, intestines, stomach and kidney.

It is found in the cell membrane. The protein resides in the cell junction. Its subcellular location is the gap junction. One gap junction consists of a cluster of closely packed pairs of transmembrane channels, the connexons, through which materials of low MW diffuse from one cell to a neighboring cell. In Xenopus laevis (African clawed frog), this protein is Gap junction beta-1 protein (gjb1).